A 175-amino-acid polypeptide reads, in one-letter code: MTALTRFAHSRSSWFLLTGTAIGLEAAALYFQYVMKLDPCVMCIYQRLAVFGILVAGLIGMTAPKYRLIRILGASCWAVSATWGLKLALALVNMQNNPSPFATCSFLPEFPTWMPLHEWFPAVMLPTGMCTDLPWRFMDVTMAEWMVVVFSTFLVIWLLFIVPILSGSTKPSLYK.

The Cytoplasmic portion of the chain corresponds to 1 to 13 (MTALTRFAHSRSS). A helical transmembrane segment spans residues 14–30 (WFLLTGTAIGLEAAALY). Topologically, residues 31 to 48 (FQYVMKLDPCVMCIYQRL) are periplasmic. Cys-40 and Cys-43 form a disulfide bridge. A helical transmembrane segment spans residues 49 to 64 (AVFGILVAGLIGMTAP). The Cytoplasmic portion of the chain corresponds to 65 to 71 (KYRLIRI). Residues 72 to 89 (LGASCWAVSATWGLKLAL) form a helical membrane-spanning segment. Residues 90-144 (ALVNMQNNPSPFATCSFLPEFPTWMPLHEWFPAVMLPTGMCTDLPWRFMDVTMAE) are Periplasmic-facing. Cys-104 and Cys-130 are disulfide-bonded. Residues 145–163 (WMVVVFSTFLVIWLLFIVP) form a helical membrane-spanning segment. Over 164-175 (ILSGSTKPSLYK) the chain is Cytoplasmic.

Belongs to the DsbB family.

The protein resides in the cell inner membrane. Functionally, required for disulfide bond formation in some periplasmic proteins. Acts by oxidizing the DsbA protein. The protein is Disulfide bond formation protein B of Shewanella sp. (strain W3-18-1).